An 839-amino-acid polypeptide reads, in one-letter code: MAIGITACVLSLINYQGLAYSAALINEPIQACVIAREVDLTDDIRTKFAQCLGWQADQSSPVCLGFYKPITVTPLASPDEVRILADTASFYRTQRSTLSGHVEMQQGQRVVNAQTAYVYRDPKTNEVTKIEFLNHVRYLEPDRMMIARKAVVYPQDKSGEVEDVLYRFNTNRSNALLPAWGRASLIKRFANQDYFLKEATYTTCAPQDKAWAIEAESISIDNEKGKGIARNAKLRIHEWPVLYTPYLSFPTNRDRKSGFLMPIVGYSNVGGADLGIPYYWNMAPNYDMTLVPHLYTKRGLMLGGQFRYLTSKSTGTFNGNFLPKDKAFGRFLQDNEVEFPQIRGLSTNRWEVNFVDSTQFLSDLQLNVNFQQVSDDYYLQDFSTNLASVTQRQLLRQADLTYTTENWTFRGMGQSYQTLHPINEIPVSPVYERLPQLMARGYYDDLPFNANFNILGQYDQFHWPNDSWNIALNNMPQGPRFHLNPILSVPMMKPWGYVTPSVQFVENYYDISRNYTWGTSRANYNLTIPRYSLDGGLYFERDLHLKGTYYIQTLEPRLFYLRVPYYNQTLIPVYDSGFMIFNVDQLFRTNRFSGFDRIGDANQLSYALTTRWLEDESGAEKANFSIGQIKYFSERRVQLCQSPTGFCTDNPDTFGNLSSTFGTSPVASRAVYKFNPAWGITGDYIWDPATRATNNADLNLHYQPARNAIINGGYSYLVNGDVTQVRNNDTENNALHQAILSAAWPLSEKWSGIGAYSYNISKNYSMMSFLGVQYDSCCWAMRILGGRTFRSLNEEFEPRYNNNIYLQILLKGLGSVASSDPSGILNTYIPGYYDPFRRR.

The first 21 residues, 1-21 (MAIGITACVLSLINYQGLAYS), serve as a signal peptide directing secretion.

The protein belongs to the LptD family. Component of the lipopolysaccharide transport and assembly complex. Interacts with LptE and LptA.

The protein localises to the cell outer membrane. Functionally, together with LptE, is involved in the assembly of lipopolysaccharide (LPS) at the surface of the outer membrane. This Legionella pneumophila (strain Paris) protein is LPS-assembly protein LptD.